Reading from the N-terminus, the 249-residue chain is Probable transcriptional regulatory protein GOX1679 (249 aa).

The protein belongs to the TACO1 family.

It localises to the cytoplasm. The protein is Probable transcriptional regulatory protein GOX1679 of Gluconobacter oxydans (strain 621H) (Gluconobacter suboxydans).